The primary structure comprises 194 residues: Cytochrome c oxidase assembly protein CtaG (194 aa).

Residues 1-12 (MALRGPAKTVAQ) are Cytoplasmic-facing. Residues 13–35 (TVSVVIFMGALAWASVPLYDWFC) traverse the membrane as a helical; Signal-anchor for type II membrane protein segment. At 36–194 (RVTGFGGVTG…IEENSDTSLN (159 aa)) the chain is on the periplasmic side.

This sequence belongs to the COX11/CtaG family.

The protein resides in the cell inner membrane. Its function is as follows. Exerts its effect at some terminal stage of cytochrome c oxidase synthesis, probably by being involved in the insertion of the copper B into subunit I. The polypeptide is Cytochrome c oxidase assembly protein CtaG (Roseobacter denitrificans (strain ATCC 33942 / OCh 114) (Erythrobacter sp. (strain OCh 114))).